The sequence spans 314 residues: MALGSAALFVLTLTVHAAGTCPELKVLDLEGYKQLTILQGCPGLPGAAGPKGEAGAKGDRGESGLPGIPGKEGPTGPKGNQGEKGIRGEKGDSGPSQSCATGPRTCKELLTQGHFLTGWYTIYLPDCRPLTVLCDMDTDGGGWTVFQRRLDGSVDFFRDWTSYKRGFGSQLGEFWLGNDNIHALTTQGTSELRVDLSDFEGKHDFAKYSSFQIQGEAEKYKLILGNFLGGGAGDSLTPHNNRLFSTKDQDNDGSTSSCAMGYHGAWWYSQCHTSNLNGLYLRGPHKSYANGVNWKSWRGYNYSCKVSEMKVRLI.

Positions 1-17 (MALGSAALFVLTLTVHA) are cleaved as a signal peptide. The Collagen-like domain maps to 40–96 (GCPGLPGAAGPKGEAGAKGDRGESGLPGIPGKEGPTGPKGNQGEKGIRGEKGDSGPS). The tract at residues 49 to 101 (GPKGEAGAKGDRGESGLPGIPGKEGPTGPKGNQGEKGIRGEKGDSGPSQSCAT) is disordered. A Fibrinogen C-terminal domain is found at 97–314 (QSCATGPRTC…KVSEMKVRLI (218 aa)). Cystine bridges form between cysteine 99-cysteine 127 and cysteine 106-cysteine 134. The Ca(2+) site is built by aspartate 250, aspartate 252, serine 254, and serine 256. Cysteine 258 and cysteine 271 are disulfide-bonded. Residue asparagine 301 is glycosylated (N-linked (GlcNAc...) asparagine).

Belongs to the ficolin lectin family. As to quaternary structure, homotrimer. Interacts with elastin. Interacts with MASP1 and MASP2.

It is found in the secreted. In terms of biological role, may function in innate immunity through activation of the lectin complement pathway. Calcium-dependent and GlcNAc-binding lectin. The sequence is that of Ficolin-2 (Fcn2) from Mus musculus (Mouse).